The sequence spans 167 residues: Centrin-3 (167 aa).

EF-hand domains follow at residues 25–60 (EQKQ…LGFD), 61–96 (VKKA…WILE), 98–133 (DPHE…LGEN), and 134–167 (MSDE…TGDI). Ser-135 carries the phosphoserine modification. Positions 147, 149, 151, 153, and 158 each coordinate Ca(2+).

The protein belongs to the centrin family. As to quaternary structure, monomer. Component of the nuclear pore complex (NPC)-associated TREX-2 complex (transcription and export complex 2), composed of at least GANP, 2 copies of ENY2, PCID2, SEM1/DSS1, and either centrin CETN2 or centrin CETN3. The TREX-2 complex also associates with ALYREF/ALY and with the nucleoporin NUP153. Interacts with USP49.

Its subcellular location is the cytoplasm. The protein localises to the cytoskeleton. It is found in the microtubule organizing center. It localises to the centrosome. The protein resides in the nucleus. Its subcellular location is the nucleolus. The protein localises to the nucleus envelope. It is found in the nuclear pore complex. It localises to the centriole. Plays a fundamental role in microtubule-organizing center structure and function. In terms of biological role, as a component of the TREX-2 complex, involved in the export of mRNAs to the cytoplasm through the nuclear pores. The chain is Centrin-3 (CETN3) from Homo sapiens (Human).